The primary structure comprises 726 residues: Replication restart protein PriA (726 aa).

I234 is an ATP binding site. The Helicase ATP-binding domain maps to I234 to L373. Positions L316–H319 match the DEAH box motif. 8 residues coordinate Zn(2+): C431, C434, C440, C443, C458, C461, C471, and C474.

This sequence belongs to the helicase family. PriA subfamily. As to quaternary structure, component of the replication restart primosome. It depends on Zn(2+) as a cofactor.

It catalyses the reaction Couples ATP hydrolysis with the unwinding of duplex DNA by translocating in the 3'-5' direction.. The catalysed reaction is ATP + H2O = ADP + phosphate + H(+). Functionally, initiates the restart of stalled replication forks, which reloads the replicative helicase on sites other than the origin of replication. Recognizes and binds to abandoned replication forks and remodels them to uncover a helicase loading site. Promotes assembly of the primosome at these replication forks. This Buchnera aphidicola subsp. Acyrthosiphon pisum (strain APS) (Acyrthosiphon pisum symbiotic bacterium) protein is Replication restart protein PriA.